The chain runs to 452 residues: AP-4 complex subunit mu-1 (452 aa).

In terms of domain architecture, MHD spans Lys-184–Arg-451.

This sequence belongs to the adaptor complexes medium subunit family. In terms of assembly, adaptor protein complex 4 (AP-4) is a heterotetramer composed of two large adaptins (epsilon-type subunit AP4E1 and beta-type subunit AP4B1), a medium adaptin (mu-type subunit AP4M1) and a small adaptin (sigma-type AP4S1). Interacts with tyrosine-based sorting signals on the cytoplasmic tail of cargo proteins such as APP, ATG9A, LAMP2 and NAGPA. Interacts with the C-terminal domain of GRID2. Interacts with GRIA1 and GRIA2; the interaction is indirect via CACNG3. Interacts with CACNG3; CACNG3 associates GRIA1 and GRIA2 with the adaptor protein complex 4 (AP-4) to target them to the somatodendritic compartment of neurons. Interacts with HOOK1 and HOOK2; the interactions are direct, mediate the interaction between FTS-Hook-FHIP (FHF) complex and AP-4 and the perinuclear distribution of AP-4.

The protein resides in the golgi apparatus. The protein localises to the trans-Golgi network membrane. It is found in the early endosome. Functionally, component of the adaptor protein complex 4 (AP-4). Adaptor protein complexes are vesicle coat components involved both in vesicle formation and cargo selection. They control the vesicular transport of proteins in different trafficking pathways. AP-4 forms a non clathrin-associated coat on vesicles departing the trans-Golgi network (TGN) and may be involved in the targeting of proteins from the trans-Golgi network (TGN) to the endosomal-lysosomal system. It is also involved in protein sorting to the basolateral membrane in epithelial cells and the proper asymmetric localization of somatodendritic proteins in neurons. Within AP-4, the mu-type subunit AP4M1 is directly involved in the recognition and binding of tyrosine-based sorting signals found in the cytoplasmic part of cargos. The adaptor protein complex 4 (AP-4) may also recognize other types of sorting signal. This Canis lupus familiaris (Dog) protein is AP-4 complex subunit mu-1.